The primary structure comprises 180 residues: UPF0340 protein YwlG (180 aa).

Belongs to the UPF0340 family.

This chain is UPF0340 protein YwlG (ywlG), found in Bacillus subtilis (strain 168).